An 86-amino-acid polypeptide reads, in one-letter code: Small ribosomal subunit protein bS20 (86 aa).

It belongs to the bacterial ribosomal protein bS20 family.

In terms of biological role, binds directly to 16S ribosomal RNA. This is Small ribosomal subunit protein bS20 from Sulfurimonas denitrificans (strain ATCC 33889 / DSM 1251) (Thiomicrospira denitrificans (strain ATCC 33889 / DSM 1251)).